The sequence spans 343 residues: MLVLGIETSCDETGIALYDGERGLLAHTLYSQIKLHADYGGVVPELASRDHVRKVIPLIEEVLNQAGVGKSDIDAIAYTAGPGLVGALMVGGAIASALAYALGIPTIGVHHMEGHLLAPMLEENPPEFPFVALLVSGGHTQLVRVDGVGEYELLGESVDDAAGEAFDKVAKMLGLDYPGGPQVAKLAEEGNLQRFKFPRPMTDRPGLDFSFSGLKTFTLNTLQEAEASGGVDDNLRADVAACFQEAVVETMVIKCRRALRQTGLKRLIMAGGVSANRRLREKLQQMVKGEKALVYYARPEFCTDNGAMIAYAGHQRLAVGQRGDLSVLATPRWPLVELPSIKG.

Fe cation-binding residues include H111 and H115. Residues 134 to 138 (LVSGG), D167, G180, and N276 contribute to the substrate site. D304 contacts Fe cation.

The protein belongs to the KAE1 / TsaD family. It depends on Fe(2+) as a cofactor.

The protein localises to the cytoplasm. It carries out the reaction L-threonylcarbamoyladenylate + adenosine(37) in tRNA = N(6)-L-threonylcarbamoyladenosine(37) in tRNA + AMP + H(+). In terms of biological role, required for the formation of a threonylcarbamoyl group on adenosine at position 37 (t(6)A37) in tRNAs that read codons beginning with adenine. Is involved in the transfer of the threonylcarbamoyl moiety of threonylcarbamoyl-AMP (TC-AMP) to the N6 group of A37, together with TsaE and TsaB. TsaD likely plays a direct catalytic role in this reaction. The sequence is that of tRNA N6-adenosine threonylcarbamoyltransferase from Hahella chejuensis (strain KCTC 2396).